We begin with the raw amino-acid sequence, 162 residues long: Nucleotide-binding protein AnaeK_0101 (162 aa).

It belongs to the YajQ family.

Functionally, nucleotide-binding protein. This Anaeromyxobacter sp. (strain K) protein is Nucleotide-binding protein AnaeK_0101.